A 374-amino-acid polypeptide reads, in one-letter code: Phosphomevalonate kinase (374 aa).

This sequence belongs to the GHMP kinase family. Homodimer. Requires Mg(2+) as cofactor.

It catalyses the reaction (R)-5-phosphomevalonate + ATP = (R)-5-diphosphomevalonate + ADP. It functions in the pathway isoprenoid biosynthesis; isopentenyl diphosphate biosynthesis via mevalonate pathway; isopentenyl diphosphate from (R)-mevalonate: step 2/3. In terms of biological role, catalyzes the phosphorylation of (R)-mevalonate 5-phosphate (MVAP) to (R)-mevalonate 5-diphosphate (MVAPP). Functions in the mevalonate (MVA) pathway leading to isopentenyl diphosphate (IPP), a key precursor for the biosynthesis of isoprenoid compounds. This chain is Phosphomevalonate kinase, found in Streptomyces sp. (strain CL190).